Reading from the N-terminus, the 792-residue chain is MASKTKASEALKVVARCRPLSRKEEAAGHEQILTMDVKLGQVTLRNPRAALGELPKTFTFDAVYDASSKQADLYDETVRPLVDSVLQGFNGTVFAYGQTGTGKTYTMQGTWVEPEQRGVIPNAFEHIFTHISRSQNQQYLVRASYLEIYQEEIRDLVSKEPGKRLELKENPETGVYIKDLSSFVTKNVKEIEHVMNLGNQTRAVGSTHMNEVSSRSHAIFVITVECSERGSDGQDHIRVGKLNLVDLAGSERQNKAGPNTTGGTATQPTGGGGGGGGGGGGGERPKEASKINLSLSALGNVIAALSGNRSTHIPYRDSKLTRLLQDSLGGNAKTIMVATLGPASHSYDESLSTLRFANRAKNIKNKPRVNEDPKDTLLREFQEEIARLKAQLEKKGMLGKRLRRKSSRRKKAVSAPAGYPEGPVIEAWVAEEEDDNNNNHRPPQPILETALDKNMENYLQEQKERLEEEKAAIQDDRSLVSEEKKKLLEEKEKMLEDLRREQEATELLAAKYKAMESKLLIGGRNIMDHTNEQQKMLELKRQEIAEQKRREREMQQEMMLRDEETMELRGTYTSLQQEVEVKTKKLKKLYAKLQAVKAEIQDQHDEYIRVRQDLEEAQNEQTRELKLKYLIIENFIPPEEKNKIMNRLFLDCEEEQWKFQPLVPSGANSSQMKKRPTSAVGYKRPISQYARVAMAMGSHPRYRAENIMFLELDVSPPAVFEMEFSHDQDQDPRALHMERLMRLDSFLERPSTSKVRKSRSWCQSPQRPPPPTAHASLAASAALRPTTVLDHE.

Positions alanine 10–isoleucine 363 constitute a Kinesin motor domain. Residue glycine 97–threonine 104 participates in ATP binding. Disordered stretches follow at residues glycine 249 to glutamate 287, methionine 397 to glycine 418, and arginine 749 to glutamate 792. Over residues glycine 257 to proline 268 the composition is skewed to low complexity. Positions threonine 269–glycine 282 are enriched in gly residues. Residues lysine 374–leucine 627 are a coiled coil. Residues methionine 397–alanine 412 show a composition bias toward basic residues. Residues lysine 628 to glutamate 792 are globular. The span at alanine 773–glutamate 792 shows a compositional bias: low complexity.

This sequence belongs to the TRAFAC class myosin-kinesin ATPase superfamily. Kinesin family. Kinesin II subfamily. As to quaternary structure, heterodimer of KIF3A and KIF3C.

Its subcellular location is the cytoplasm. The protein localises to the cytoskeleton. Microtubule-based anterograde translocator for membranous organelles. The sequence is that of Kinesin-like protein KIF3C (KIF3C) from Bos taurus (Bovine).